We begin with the raw amino-acid sequence, 230 residues long: Cytochrome c oxidase subunit 2 (230 aa).

Residues 1 to 14 (MAHPSQLGFQDAAS) are Mitochondrial intermembrane-facing. Residues 15-45 (PVMEELLHFHDHALMIVFLISTLVLYIIVAM) traverse the membrane as a helical segment. Topologically, residues 46–59 (VSTKLTNKYILDSQ) are mitochondrial matrix. The helical transmembrane segment at 60–87 (EIEIIWTVLPAVILILIALPSLRILYLM) threads the bilayer. Topologically, residues 88–230 (DEINDPHLTI…SWSSLMLEDA (143 aa)) are mitochondrial intermembrane. H161, C196, E198, C200, H204, and M207 together coordinate Cu cation. E198 lines the Mg(2+) pocket.

It belongs to the cytochrome c oxidase subunit 2 family. As to quaternary structure, component of the cytochrome c oxidase (complex IV, CIV), a multisubunit enzyme composed of 14 subunits. The complex is composed of a catalytic core of 3 subunits MT-CO1, MT-CO2 and MT-CO3, encoded in the mitochondrial DNA, and 11 supernumerary subunits COX4I, COX5A, COX5B, COX6A, COX6B, COX6C, COX7A, COX7B, COX7C, COX8 and NDUFA4, which are encoded in the nuclear genome. The complex exists as a monomer or a dimer and forms supercomplexes (SCs) in the inner mitochondrial membrane with NADH-ubiquinone oxidoreductase (complex I, CI) and ubiquinol-cytochrome c oxidoreductase (cytochrome b-c1 complex, complex III, CIII), resulting in different assemblies (supercomplex SCI(1)III(2)IV(1) and megacomplex MCI(2)III(2)IV(2)). Found in a complex with TMEM177, COA6, COX18, COX20, SCO1 and SCO2. Interacts with TMEM177 in a COX20-dependent manner. Interacts with COX20. Interacts with COX16. It depends on Cu cation as a cofactor.

It localises to the mitochondrion inner membrane. The catalysed reaction is 4 Fe(II)-[cytochrome c] + O2 + 8 H(+)(in) = 4 Fe(III)-[cytochrome c] + 2 H2O + 4 H(+)(out). Its function is as follows. Component of the cytochrome c oxidase, the last enzyme in the mitochondrial electron transport chain which drives oxidative phosphorylation. The respiratory chain contains 3 multisubunit complexes succinate dehydrogenase (complex II, CII), ubiquinol-cytochrome c oxidoreductase (cytochrome b-c1 complex, complex III, CIII) and cytochrome c oxidase (complex IV, CIV), that cooperate to transfer electrons derived from NADH and succinate to molecular oxygen, creating an electrochemical gradient over the inner membrane that drives transmembrane transport and the ATP synthase. Cytochrome c oxidase is the component of the respiratory chain that catalyzes the reduction of oxygen to water. Electrons originating from reduced cytochrome c in the intermembrane space (IMS) are transferred via the dinuclear copper A center (CU(A)) of subunit 2 and heme A of subunit 1 to the active site in subunit 1, a binuclear center (BNC) formed by heme A3 and copper B (CU(B)). The BNC reduces molecular oxygen to 2 water molecules using 4 electrons from cytochrome c in the IMS and 4 protons from the mitochondrial matrix. The chain is Cytochrome c oxidase subunit 2 (mt-co2) from Gadus morhua (Atlantic cod).